We begin with the raw amino-acid sequence, 362 residues long: Cobalt-precorrin-5B C(1)-methyltransferase (362 aa).

The protein belongs to the CbiD family.

It carries out the reaction Co-precorrin-5B + S-adenosyl-L-methionine = Co-precorrin-6A + S-adenosyl-L-homocysteine. It participates in cofactor biosynthesis; adenosylcobalamin biosynthesis; cob(II)yrinate a,c-diamide from sirohydrochlorin (anaerobic route): step 6/10. Its function is as follows. Catalyzes the methylation of C-1 in cobalt-precorrin-5B to form cobalt-precorrin-6A. This is Cobalt-precorrin-5B C(1)-methyltransferase from Burkholderia multivorans (strain ATCC 17616 / 249).